The sequence spans 170 residues: Cyclic pyranopterin monophosphate synthase (170 aa).

A disordered region spans residues 1–25; it reads MADPSTLTHPDPEGGVRMMDASQKS. Residues 78-80 and 116-117 contribute to the substrate site; these read LCH and ME. Aspartate 131 is an active-site residue.

The protein belongs to the MoaC family. As to quaternary structure, homohexamer; trimer of dimers.

It carries out the reaction (8S)-3',8-cyclo-7,8-dihydroguanosine 5'-triphosphate = cyclic pyranopterin phosphate + diphosphate. It functions in the pathway cofactor biosynthesis; molybdopterin biosynthesis. In terms of biological role, catalyzes the conversion of (8S)-3',8-cyclo-7,8-dihydroguanosine 5'-triphosphate to cyclic pyranopterin monophosphate (cPMP). This is Cyclic pyranopterin monophosphate synthase from Salinibacter ruber (strain DSM 13855 / M31).